The primary structure comprises 209 residues: Na(+)-translocating NADH-quinone reductase subunit D (209 aa).

5 helical membrane passes run 42-62 (LVMT…ISLI), 72-92 (IIVQ…ILQA), 103-123 (VFVG…AYAM), 131-151 (FMDG…VGFL), and 178-198 (NGLF…IWGL).

This sequence belongs to the NqrDE/RnfAE family. Composed of six subunits; NqrA, NqrB, NqrC, NqrD, NqrE and NqrF.

It is found in the cell inner membrane. The enzyme catalyses a ubiquinone + n Na(+)(in) + NADH + H(+) = a ubiquinol + n Na(+)(out) + NAD(+). In terms of biological role, NQR complex catalyzes the reduction of ubiquinone-1 to ubiquinol by two successive reactions, coupled with the transport of Na(+) ions from the cytoplasm to the periplasm. NqrA to NqrE are probably involved in the second step, the conversion of ubisemiquinone to ubiquinol. In Photorhabdus laumondii subsp. laumondii (strain DSM 15139 / CIP 105565 / TT01) (Photorhabdus luminescens subsp. laumondii), this protein is Na(+)-translocating NADH-quinone reductase subunit D.